A 160-amino-acid chain; its full sequence is MPRKGPVPPREIPPDPKYGDVLVQKLINKVMKDGKKSVAEWIVYTALEEAAKEVNMHPVELLHKVIEKLKPEWEVRPTRVGGATYQVPIEVPERRQISLAIKWLVQAARERPRGREQYTMIERLKAELLDALNERGGAYKKKEETHRMAHANMVFSHFRW.

Belongs to the universal ribosomal protein uS7 family. As to quaternary structure, part of the 30S ribosomal subunit. Contacts proteins S9 and S11.

Functionally, one of the primary rRNA binding proteins, it binds directly to 16S rRNA where it nucleates assembly of the head domain of the 30S subunit. Is located at the subunit interface close to the decoding center, probably blocks exit of the E-site tRNA. The polypeptide is Small ribosomal subunit protein uS7A (Aquifex aeolicus (strain VF5)).